A 26-amino-acid chain; its full sequence is Turripeptide OL49 (26 aa).

In terms of processing, contains 3 disulfide bonds. Expressed by the venom duct.

The protein localises to the secreted. In terms of biological role, acts as a neurotoxin by inhibiting an ion channel. The chain is Turripeptide OL49 from Iotyrris olangoensis (Sea snail).